A 1940-amino-acid polypeptide reads, in one-letter code: Myosin-3 (1940 aa).

Residues 33–82 (DAKTYCFVVDSKEEYAKGKIKSSQDGKVTVETEDNRTLVVKPEDVYAMNP) form the Myosin N-terminal SH3-like domain. Residues 86–779 (DKIEDMAMLT…LLGTLEEMRD (694 aa)) form the Myosin motor domain. Lysine 130 carries the post-translational modification N6,N6,N6-trimethyllysine. Residue 179 to 186 (GESGAGKT) coordinates ATP. Actin-binding regions lie at residues 656–678 (LNKL…IPNE) and 758–772 (KFGH…GLLG). An IQ domain is found at 782 to 811 (LAKLITRTQAVCRGFLMRVEFQKMMQRRES). A coiled-coil region spans residues 840 to 1933 (LLKSAETEKE…KTRDFTSSRM (1094 aa)). Positions 1260-1289 (ARGKNEETQRSLSELTTQKSRLQTEAGELS) are disordered. The segment covering 1269-1282 (RSLSELTTQKSRLQ) has biased composition (polar residues).

Belongs to the TRAFAC class myosin-kinesin ATPase superfamily. Myosin family. Muscle myosin is a hexameric protein that consists of 2 heavy chain subunits (MHC), 2 alkali light chain subunits (MLC) and 2 regulatory light chain subunits (MLC-2).

Its subcellular location is the cytoplasm. The protein resides in the myofibril. Muscle contraction. The protein is Myosin-3 (Myh3) of Rattus norvegicus (Rat).